A 433-amino-acid chain; its full sequence is Protein CLP1 homolog (433 aa).

ATP contacts are provided by residues E22, R61, and 128–133 (DVGKTT).

It belongs to the Clp1 family. Clp1 subfamily.

The protein resides in the nucleus. Required for endonucleolytic cleavage during polyadenylation-dependent pre-mRNA 3'-end formation. This chain is Protein CLP1 homolog, found in Brugia malayi (Filarial nematode worm).